We begin with the raw amino-acid sequence, 256 residues long: Phosphomannomutase (256 aa).

Asp12 serves as the catalytic Nucleophile. 2 residues coordinate Mg(2+): Asp12 and Asp14. Asp14 functions as the Proton donor/acceptor in the catalytic mechanism. The alpha-D-mannose 1-phosphate site is built by Arg21, Arg123, Arg134, Arg141, Ser179, and Asp181. Residue Asp209 coordinates Mg(2+).

It belongs to the eukaryotic PMM family. In terms of assembly, homodimer.

It is found in the cytoplasm. It carries out the reaction alpha-D-mannose 1-phosphate = D-mannose 6-phosphate. The protein operates within nucleotide-sugar biosynthesis; GDP-alpha-D-mannose biosynthesis; alpha-D-mannose 1-phosphate from D-fructose 6-phosphate: step 2/2. In terms of biological role, involved in the synthesis of the GDP-mannose and dolichol-phosphate-mannose required for a number of critical mannosyl transfer reactions. The chain is Phosphomannomutase (SEC53) from Encephalitozoon cuniculi (strain GB-M1) (Microsporidian parasite).